The chain runs to 815 residues: Protein SEY1 homolog (815 aa).

Residues Met1–Asn737 lie on the Cytoplasmic side of the membrane. The GB1/RHD3-type G domain occupies Thr28–Pro260. Residue Gly38–Ser45 coordinates GTP. Residues Ala298–Glu321 are a coiled coil. The chain crosses the membrane as a helical span at residues Ile738–Leu758. Topologically, residues Thr759–Pro761 are lumenal. Residues Val762–Phe782 form a helical membrane-spanning segment. The Cytoplasmic portion of the chain corresponds to Ser783–Lys815.

It belongs to the TRAFAC class dynamin-like GTPase superfamily. GB1/RHD3 GTPase family. RHD3 subfamily.

Its subcellular location is the endoplasmic reticulum membrane. In terms of biological role, probable GTP-binding protein that may be involved in cell development. In Cryptosporidium hominis, this protein is Protein SEY1 homolog.